A 187-amino-acid polypeptide reads, in one-letter code: Signal peptidase complex catalytic subunit SEC11 (187 aa).

Over 1–18 (MLSSLSPYMANPRNTLSQ) the chain is Cytoplasmic. A helical; Signal-anchor for type II membrane protein transmembrane segment spans residues 19–39 (VLNFGLVLSSAFMVWKALSVI). Topologically, residues 40–187 (TNSASPVVVV…MGLMVMLQRE (148 aa)) are lumenal. Catalysis depends on charge relay system residues S53 and H92. Residue N125 is glycosylated (N-linked (GlcNAc...) asparagine). D129 serves as the catalytic Charge relay system. The C-terminal short (CTS) helix stretch occupies residues 173-184 (VLLGFMGLMVML).

It belongs to the peptidase S26B family. In terms of assembly, component of the signal peptidase complex (SPC) composed of a catalytic subunit SEC11 and three accessory subunits SPC1, SPC2 and SPC3. The complex induces a local thinning of the ER membrane which is used to measure the length of the signal peptide (SP) h-region of protein substrates. This ensures the selectivity of the complex towards h-regions shorter than 18-20 amino acids. SPC associates with the translocon complex.

Its subcellular location is the endoplasmic reticulum membrane. The catalysed reaction is Cleavage of hydrophobic, N-terminal signal or leader sequences from secreted and periplasmic proteins.. Catalytic component of the signal peptidase complex (SPC) which catalyzes the cleavage of N-terminal signal sequences from nascent proteins as they are translocated into the lumen of the endoplasmic reticulum. Specifically cleaves N-terminal signal peptides that contain a hydrophobic alpha-helix (h-region) shorter than 18-20 amino acids. The polypeptide is Signal peptidase complex catalytic subunit SEC11 (SEC11) (Ajellomyces capsulatus (strain NAm1 / WU24) (Darling's disease fungus)).